The following is a 651-amino-acid chain: Histone-arginine methyltransferase CARM1 (651 aa).

The interaction with C9orf72 stretch occupies residues 28–139 (ATVSVFPGAR…GHTLERSVFS (112 aa)). One can recognise an SAM-dependent MTase PRMT-type domain in the interval 147–454 (AVQYFQFYGY…KRQSYDISIV (308 aa)). Residues Gln160, Arg169, Gly193, and Glu215 each contribute to the S-adenosyl-L-methionine site. Ser217 is subject to Phosphoserine. Lys228 participates in a covalent cross-link: Glycyl lysine isopeptide (Lys-Gly) (interchain with G-Cter in ubiquitin). The S-adenosyl-L-methionine site is built by Glu244 and Ser272. Positions 347 to 380 (RILMAKSVKYTVNFLEAKEGDLHRIEIPFKFHML) are required for nuclear translocation. The tract at residues 500–651 (TGSTYNLSSG…IPTNTMHYGS (152 aa)) is transactivation domain. Arg551 is modified (dimethylated arginine). Positions 581 to 617 (RSSYQWGPGRLRGHAGSSVPMTCPTGSSGAQGGGGSS) are disordered.

The protein belongs to the class I-like SAM-binding methyltransferase superfamily. Protein arginine N-methyltransferase family. In terms of assembly, homodimer. Interacts with NR1H4. Interacts with SNRPC. Interacts with the C-terminus of NCOA2/GRIP1, NCO3/ACTR and NCOA1/SRC1. Part of a complex consisting of CARM1, EP300/P300 and NCOA2/GRIP1. Interacts with FLII, TP53, myogenic factor MEF2, EP300/P300, TRIM24, CREBBP and CTNNB1. Interacts with RELA. Identified in a complex containing CARM1, TRIM24 and NCOA2/GRIP1. Interacts with NCOA3/SRC3. Interacts with SKP2. Interacts (via PH domain-like fold) with C9orf72. Interacts with PARP1; promoting PARP1 recruimtent to replication forks. Post-translationally, auto-methylated on Arg-551. Methylation enhances transcription coactivator activity. Methylation is required for its role in the regulation of pre-mRNA alternative splicing. In terms of processing, phosphorylation at Ser-217 interferes with S-adenosyl-L-methionine binding and strongly reduces methyltransferase activity. Phosphorylation at Ser-217 is strongly increased during mitosis, and decreases rapidly to a very low, basal level after entry into the G1 phase of the cell cycle. Phosphorylation at Ser-217 may promote location in the cytosol. Ubiquitinated by E3 ubiquitin-protein ligase complex containing FBXO9 at Lys-228; leading to proteasomal degradation. In terms of tissue distribution, isoform 1 is expressed at low levels in brain, liver and testis. As to expression, isoform 2 is highly expressed in brain, liver, skeletal muscle and testis. Isoform 3 is highly expressed in spleen, liver and kidney. In terms of tissue distribution, isoform 4 is expressed in spleen, liver and kidney.

The protein localises to the nucleus. The protein resides in the cytoplasm. Its subcellular location is the chromosome. It carries out the reaction L-arginyl-[protein] + 2 S-adenosyl-L-methionine = N(omega),N(omega)-dimethyl-L-arginyl-[protein] + 2 S-adenosyl-L-homocysteine + 2 H(+). Its activity is regulated as follows. Methylation of H3R17 (H3R17me) by CARM1 is stimulated by preacetylation of H3 'Lys-18' (H3K18ac) H3 'Lys-23' (H3K23ac) by EP300 and blocked by citrullination of H3 'Arg-17' (H3R17ci) by PADI4. Functionally, methylates (mono- and asymmetric dimethylation) the guanidino nitrogens of arginyl residues in several proteins involved in DNA packaging, transcription regulation, pre-mRNA splicing, and mRNA stability. Recruited to promoters upon gene activation together with histone acetyltransferases from EP300/P300 and p160 families, methylates histone H3 at 'Arg-17' (H3R17me), forming mainly asymmetric dimethylarginine (H3R17me2a), leading to activation of transcription via chromatin remodeling. During nuclear hormone receptor activation and TCF7L2/TCF4 activation, acts synergically with EP300/P300 and either one of the p160 histone acetyltransferases NCOA1/SRC1, NCOA2/GRIP1 and NCOA3/ACTR or CTNNB1/beta-catenin to activate transcription. During myogenic transcriptional activation, acts together with NCOA3/ACTR as a coactivator for MEF2C. During monocyte inflammatory stimulation, acts together with EP300/P300 as a coactivator for NF-kappa-B. Acts as a coactivator for PPARG, promotes adipocyte differentiation and the accumulation of brown fat tissue. Plays a role in the regulation of pre-mRNA alternative splicing by methylation of splicing factors. Also seems to be involved in p53/TP53 transcriptional activation. Methylates EP300/P300, both at 'Arg-2142', which may loosen its interaction with NCOA2/GRIP1, and at 'Arg-580' and 'Arg-604' in the KIX domain, which impairs its interaction with CREB and inhibits CREB-dependent transcriptional activation. Also methylates arginine residues in RNA-binding proteins PABPC1, ELAVL1 and ELAV4, which may affect their mRNA-stabilizing properties and the half-life of their target mRNAs. Acts as a transcriptional coactivator of ACACA/acetyl-CoA carboxylase by enriching H3R17 methylation at its promoter, thereby positively regulating fatty acid synthesis. Independently of its methyltransferase activity, involved in replication fork progression: promotes PARP1 recruitment to replication forks, leading to poly-ADP-ribosylation of chromatin at replication forks and reduced fork speed. Isoform 3 specifically affects pre-mRNA splicing. This activity is independent from methyltransferase activity. This is Histone-arginine methyltransferase CARM1 (Carm1) from Rattus norvegicus (Rat).